The sequence spans 102 residues: Large ribosomal subunit protein bL21 (102 aa).

Belongs to the bacterial ribosomal protein bL21 family. Part of the 50S ribosomal subunit. Contacts protein L20.

This protein binds to 23S rRNA in the presence of protein L20. In Lachnoclostridium phytofermentans (strain ATCC 700394 / DSM 18823 / ISDg) (Clostridium phytofermentans), this protein is Large ribosomal subunit protein bL21.